Reading from the N-terminus, the 571-residue chain is Proline--tRNA ligase (571 aa).

The protein belongs to the class-II aminoacyl-tRNA synthetase family. ProS type 1 subfamily. As to quaternary structure, homodimer.

The protein resides in the cytoplasm. It catalyses the reaction tRNA(Pro) + L-proline + ATP = L-prolyl-tRNA(Pro) + AMP + diphosphate. In terms of biological role, catalyzes the attachment of proline to tRNA(Pro) in a two-step reaction: proline is first activated by ATP to form Pro-AMP and then transferred to the acceptor end of tRNA(Pro). As ProRS can inadvertently accommodate and process non-cognate amino acids such as alanine and cysteine, to avoid such errors it has two additional distinct editing activities against alanine. One activity is designated as 'pretransfer' editing and involves the tRNA(Pro)-independent hydrolysis of activated Ala-AMP. The other activity is designated 'posttransfer' editing and involves deacylation of mischarged Ala-tRNA(Pro). The misacylated Cys-tRNA(Pro) is not edited by ProRS. This Psychromonas ingrahamii (strain DSM 17664 / CCUG 51855 / 37) protein is Proline--tRNA ligase.